A 257-amino-acid polypeptide reads, in one-letter code: RNA polymerase sigma-B factor (257 aa).

A Polymerase core binding motif is present at residues 58–71 (DIIQVGMLGLLGAI). Positions 224 to 243 (QKDTGERLGISQMHVSRIKR) form a DNA-binding region, H-T-H motif.

This sequence belongs to the sigma-70 factor family. SigB subfamily.

Sigma factors are initiation factors that promote the attachment of RNA polymerase to specific initiation sites and are then released. The polypeptide is RNA polymerase sigma-B factor (sigB) (Bacillus anthracis).